We begin with the raw amino-acid sequence, 322 residues long: Tetrahydromethanopterin S-methyltransferase subunit H (322 aa).

It belongs to the MtrH family. As to quaternary structure, the complex is composed of 8 subunits; MtrA, MtrB, MtrC, MtrD, MtrE, MtrF, MtrG and MtrH.

The catalysed reaction is 5-methyl-5,6,7,8-tetrahydromethanopterin + coenzyme M + 2 Na(+)(in) = 5,6,7,8-tetrahydromethanopterin + methyl-coenzyme M + 2 Na(+)(out). The protein operates within one-carbon metabolism; methanogenesis from CO(2); methyl-coenzyme M from 5,10-methylene-5,6,7,8-tetrahydromethanopterin: step 2/2. Part of a complex that catalyzes the formation of methyl-coenzyme M and tetrahydromethanopterin from coenzyme M and methyl-tetrahydromethanopterin. This is an energy-conserving, sodium-ion translocating step. MtrH catalyzes the transfer of the methyl group from methyl-tetrahydromethanopterin to the corrinoid prosthetic group of MtrA. This chain is Tetrahydromethanopterin S-methyltransferase subunit H, found in Methanopyrus kandleri (strain AV19 / DSM 6324 / JCM 9639 / NBRC 100938).